Reading from the N-terminus, the 1103-residue chain is Voltage-dependent calcium channel subunit alpha-2/delta-1 (1103 aa).

A signal peptide spans 1 to 24 (MAAGCLLALTLTLFQSLLIGPSSE). The Extracellular portion of the chain corresponds to 25-1073 (EPFPSAVTIK…VLEDYTDCGG (1049 aa)). A glycan (N-linked (GlcNAc...) asparagine) is linked at Asn-92. Phosphoserine is present on Ser-119. N-linked (GlcNAc...) asparagine glycosylation is found at Asn-136 and Asn-184. The 178-residue stretch at 253-430 (DMLILVDVSG…INTQEYLDVL (178 aa)) folds into the VWFA domain. 3 residues coordinate a divalent metal cation: Asp-259, Ser-261, and Ser-263. An MIDAS-like motif motif is present at residues 259–263 (DVSGS). Residues Asn-324, Asn-348, Asn-468, Asn-475, Asn-604, Asn-613, Asn-675, Asn-781, Asn-824, Asn-888, Asn-895, Asn-985, and Asn-998 are each glycosylated (N-linked (GlcNAc...) asparagine). Cys-404 and Cys-1059 are oxidised to a cystine. In terms of domain architecture, Cache spans 446-556 (WTNVYLDALE…NIQNPKSQEP (111 aa)). The chain crosses the membrane as a helical span at residues 1074–1094 (VSGLNPSLWYIIGIQFLLLWL). Over 1095-1103 (VSGSTHRLL) the chain is Cytoplasmic.

This sequence belongs to the calcium channel subunit alpha-2/delta family. Dimer formed of alpha-2-1 and delta-1 chains; disulfide-linked. Voltage-dependent calcium channels are multisubunit complexes, consisting of alpha-1 (CACNA1), alpha-2 (CACNA2D), beta (CACNB) and delta (CACNA2D) subunits in a 1:1:1:1 ratio. Post-translationally, proteolytically processed into subunits alpha-2-1 and delta-1 that are disulfide-linked. In terms of tissue distribution, isoform 1 is expressed in skeletal muscle. Isoform 2 is expressed in the central nervous system. Isoform 2, isoform 4 and isoform 5 are expressed in neuroblastoma cells. Isoform 3, isoform 4 and isoform 5 are expressed in the aorta.

The protein resides in the membrane. The protein localises to the cell membrane. Its function is as follows. The alpha-2/delta subunit of voltage-dependent calcium channels regulates calcium current density and activation/inactivation kinetics of the calcium channel. Plays an important role in excitation-contraction coupling. The polypeptide is Voltage-dependent calcium channel subunit alpha-2/delta-1 (CACNA2D1) (Homo sapiens (Human)).